The sequence spans 202 residues: Phosphatidyl-N-methylethanolamine N-methyltransferase (202 aa).

The Lumenal portion of the chain corresponds to 1–12 (MTTLSDYVDFSQ). Positions 13-33 (DSFKYAALSIAFNPIFWNVVA) form an intramembrane region, helical. Residues 34-45 (RAEYRSHFLTRI) are Lumenal-facing. A helical membrane pass occupies residues 46 to 66 (FGSPYRGCYFLAITIFSLGIL). Topologically, residues 67-90 (RDHIYQQALEDQPYYAPVHQPVLG) are cytoplasmic. A helical transmembrane segment spans residues 91-111 (GALFAVGSVLVLSSMYALGVT). S-adenosyl-L-methionine is bound at residue 95-97 (AVG). Residues 112–154 (GTYLGDYFGILMDAPVTGFPFNVTGSPMYWGSTLNFLGVALYK) lie on the Lumenal side of the membrane. Residues 155-175 (GKVAGILLTALVFVLYWFALK) traverse the membrane as a helical segment. The Cytoplasmic segment spans residues 176 to 202 (WEDPFTAEIYAKRERERAKSKRGGKNQ). S-adenosyl-L-methionine is bound at residue 177–178 (ED).

The protein belongs to the class VI-like SAM-binding methyltransferase superfamily. PEMT/PEM2 methyltransferase family.

The protein localises to the endoplasmic reticulum membrane. The protein resides in the mitochondrion membrane. The catalysed reaction is a 1,2-diacyl-sn-glycero-3-phospho-N-methylethanolamine + S-adenosyl-L-methionine = a 1,2-diacyl-sn-glycero-3-phospho-N,N-dimethylethanolamine + S-adenosyl-L-homocysteine + H(+). It catalyses the reaction a 1,2-diacyl-sn-glycero-3-phospho-N,N-dimethylethanolamine + S-adenosyl-L-methionine = a 1,2-diacyl-sn-glycero-3-phosphocholine + S-adenosyl-L-homocysteine + H(+). The protein operates within phospholipid metabolism; phosphatidylcholine biosynthesis. Its function is as follows. Catalyzes the second two steps of the methylation pathway of phosphatidylcholine biosynthesis, the SAM-dependent methylation of phosphatidylmonomethylethanolamine (PMME) to phosphatidyldimethylethanolamine (PDME) and of PDME to phosphatidylcholine (PC). In Emericella nidulans (strain FGSC A4 / ATCC 38163 / CBS 112.46 / NRRL 194 / M139) (Aspergillus nidulans), this protein is Phosphatidyl-N-methylethanolamine N-methyltransferase.